A 728-amino-acid polypeptide reads, in one-letter code: Beta-galactosidase 12 (728 aa).

The signal sequence occupies residues M1–A27. E185 functions as the Proton donor in the catalytic mechanism. The Nucleophile role is filled by E254. N255, N380, and N450 each carry an N-linked (GlcNAc...) asparagine glycan.

It belongs to the glycosyl hydrolase 35 family. Ubiquitous, with higher expression levels in roots and siliques.

The protein localises to the secreted. It localises to the extracellular space. It is found in the apoplast. It catalyses the reaction Hydrolysis of terminal non-reducing beta-D-galactose residues in beta-D-galactosides.. The protein is Beta-galactosidase 12 (BGAL12) of Arabidopsis thaliana (Mouse-ear cress).